The following is a 558-amino-acid chain: Glucose-6-phosphate isomerase (558 aa).

N-acetylalanine is present on Ala-2. N6-acetyllysine is present on Lys-12. Lys-34 is modified (N6-(2-hydroxyisobutyryl)lysine). Ser-107 is subject to Phosphoserine. Phosphothreonine is present on Thr-109. Lys-142 carries the post-translational modification N6-acetyllysine. Residue 159-160 coordinates D-glucose 6-phosphate; it reads GS. Ser-185 is subject to Phosphoserine; by CK2. 210-215 contributes to the D-glucose 6-phosphate binding site; it reads SKTFTT. Thr-250 bears the Phosphothreonine mark. 3 residues coordinate D-glucose 6-phosphate: Gln-354, Glu-358, and His-389. Glu-358 acts as the Proton donor in catalysis. The active site involves His-389. An N6-acetyllysine; alternate modification is found at Lys-454. Position 454 is an N6-malonyllysine; alternate (Lys-454). The residue at position 454 (Lys-454) is an N6-succinyllysine; alternate. Position 455 is a phosphoserine (Ser-455). D-glucose 6-phosphate is bound at residue Lys-519. The active site involves Lys-519.

This sequence belongs to the GPI family. As to quaternary structure, homodimer in the catalytically active form, monomer in the secreted form. Phosphorylation at Ser-185 by CK2 has been shown to decrease enzymatic activity and may contribute to secretion by a non-classical secretory pathway. Post-translationally, ISGylated.

It is found in the cytoplasm. It localises to the secreted. The catalysed reaction is alpha-D-glucose 6-phosphate = beta-D-fructose 6-phosphate. It participates in carbohydrate degradation; glycolysis; D-glyceraldehyde 3-phosphate and glycerone phosphate from D-glucose: step 2/4. In the cytoplasm, catalyzes the conversion of glucose-6-phosphate to fructose-6-phosphate, the second step in glycolysis, and the reverse reaction during gluconeogenesis. Besides it's role as a glycolytic enzyme, also acts as a secreted cytokine: acts as an angiogenic factor (AMF) that stimulates endothelial cell motility. Acts as a neurotrophic factor, neuroleukin, for spinal and sensory neurons. It is secreted by lectin-stimulated T-cells and induces immunoglobulin secretion. The chain is Glucose-6-phosphate isomerase from Sus scrofa (Pig).